The chain runs to 530 residues: Methionine--tRNA ligase (530 aa).

A 'HIGH' region motif is present at residues 18-28 (YYVNDVPHIGS). Residues Cys-133, Cys-136, Cys-151, and His-154 each coordinate Zn(2+). Positions 307–311 (KMGKS) match the 'KMSKS' region motif. Lys-310 provides a ligand contact to ATP.

This sequence belongs to the class-I aminoacyl-tRNA synthetase family. MetG type 2A subfamily. In terms of assembly, monomer. Zn(2+) serves as cofactor.

Its subcellular location is the cytoplasm. It carries out the reaction tRNA(Met) + L-methionine + ATP = L-methionyl-tRNA(Met) + AMP + diphosphate. Functionally, is required not only for elongation of protein synthesis but also for the initiation of all mRNA translation through initiator tRNA(fMet) aminoacylation. The protein is Methionine--tRNA ligase of Nostoc sp. (strain PCC 7120 / SAG 25.82 / UTEX 2576).